The following is a 471-amino-acid chain: 3-isopropylmalate dehydratase large subunit (471 aa).

Residues cysteine 349, cysteine 409, and cysteine 412 each coordinate [4Fe-4S] cluster.

The protein belongs to the aconitase/IPM isomerase family. LeuC type 1 subfamily. As to quaternary structure, heterodimer of LeuC and LeuD. [4Fe-4S] cluster is required as a cofactor.

The enzyme catalyses (2R,3S)-3-isopropylmalate = (2S)-2-isopropylmalate. It participates in amino-acid biosynthesis; L-leucine biosynthesis; L-leucine from 3-methyl-2-oxobutanoate: step 2/4. In terms of biological role, catalyzes the isomerization between 2-isopropylmalate and 3-isopropylmalate, via the formation of 2-isopropylmaleate. This is 3-isopropylmalate dehydratase large subunit from Aliivibrio salmonicida (strain LFI1238) (Vibrio salmonicida (strain LFI1238)).